The primary structure comprises 208 residues: Glutathione S-transferase P (208 aa).

Residues 1–78 (MTLKLTYFDI…HLARLNGLNG (78 aa)) enclose the GST N-terminal domain. Glutathione contacts are provided by residues Y7, W38, K42, 49–50 (QV), and 62–63 (QS). The GST C-terminal domain maps to 80-202 (NETETTFIDM…NKRAAINPPV (123 aa)).

It belongs to the GST superfamily. Pi family. As to quaternary structure, homodimer. Expressed in dopaminergic (DA) neuron (at protein levels).

The catalysed reaction is RX + glutathione = an S-substituted glutathione + a halide anion + H(+). In terms of biological role, conjugation of reduced glutathione to a wide number of exogenous and endogenous hydrophobic electrophiles. Prevents dopaminergic CEP neuron degeneration in response to Mn(2+). This chain is Glutathione S-transferase P (gst-1), found in Caenorhabditis elegans.